We begin with the raw amino-acid sequence, 105 residues long: Small ribosomal subunit protein uS10 (105 aa).

This sequence belongs to the universal ribosomal protein uS10 family. Part of the 30S ribosomal subunit.

In terms of biological role, involved in the binding of tRNA to the ribosomes. This chain is Small ribosomal subunit protein uS10, found in Nitratidesulfovibrio vulgaris (strain DSM 19637 / Miyazaki F) (Desulfovibrio vulgaris).